The following is a 67-amino-acid chain: Metallothionein-A (67 aa).

The protein belongs to the metallothionein superfamily. Type 4 family.

In terms of biological role, metallothioneins have a high content of cysteine residues that bind various heavy metals. This is Metallothionein-A from Sphaerechinus granularis (Purple sea urchin).